The chain runs to 278 residues: Putative phosphoenolpyruvate synthase regulatory protein (278 aa).

Residue 158-165 (GVSRSGKT) participates in ADP binding.

The protein belongs to the pyruvate, phosphate/water dikinase regulatory protein family. PSRP subfamily.

It catalyses the reaction [pyruvate, water dikinase] + ADP = [pyruvate, water dikinase]-phosphate + AMP + H(+). The enzyme catalyses [pyruvate, water dikinase]-phosphate + phosphate + H(+) = [pyruvate, water dikinase] + diphosphate. Functionally, bifunctional serine/threonine kinase and phosphorylase involved in the regulation of the phosphoenolpyruvate synthase (PEPS) by catalyzing its phosphorylation/dephosphorylation. This Acinetobacter baylyi (strain ATCC 33305 / BD413 / ADP1) protein is Putative phosphoenolpyruvate synthase regulatory protein.